A 327-amino-acid polypeptide reads, in one-letter code: Pyruvate dehydrogenase E1 component subunit beta (327 aa).

Thiamine diphosphate is bound at residue Glu60. The K(+) site is built by Val113, Ala161, Ile162, and Glu164.

In terms of assembly, heterodimer of an alpha and a beta chain. The cofactor is thiamine diphosphate.

Its subcellular location is the plastid. The protein localises to the chloroplast. It carries out the reaction N(6)-[(R)-lipoyl]-L-lysyl-[protein] + pyruvate + H(+) = N(6)-[(R)-S(8)-acetyldihydrolipoyl]-L-lysyl-[protein] + CO2. Its function is as follows. The pyruvate dehydrogenase complex catalyzes the overall conversion of pyruvate to acetyl-CoA and CO(2). It contains multiple copies of three enzymatic components: pyruvate dehydrogenase (E1), dihydrolipoamide acetyltransferase (E2) and lipoamide dehydrogenase (E3). This Cyanidium caldarium (Red alga) protein is Pyruvate dehydrogenase E1 component subunit beta (pdhB).